The following is a 303-amino-acid chain: Di/tripeptide transport system permease protein DppC (303 aa).

The next 7 membrane-spanning stretches (helical) occupy residues 33 to 53 (ALGG…APWV), 103 to 123 (LLIG…LGLL), 131 to 151 (AGPL…LLLA), 152 to 172 (VAIV…IAIV), 202 to 222 (AGTL…PLIV), 225 to 245 (TLSF…GLGV), and 267 to 287 (WWVV…INLM). The region spanning 99–288 (ARLSLLIGLS…LSVLAINLMG (190 aa)) is the ABC transmembrane type-1 domain.

It belongs to the binding-protein-dependent transport system permease family. OppBC subfamily. The complex is composed of two ATP-binding proteins (DppD and DppF), two transmembrane proteins (DppB and DppC) and a solute-binding protein (DppA1-A5). Five orthologous SBPs (DppA1-A5) are present in P.aeruginosa, which increases the substrate specificity of the DppBCDF transporter.

It is found in the cell inner membrane. Its function is as follows. Part of the ABC transporter DppABCDF involved in the uptake of various di/tripeptides. Is also involved in the uptake of phaseolotoxin, a toxic tripeptide inhibiting the enzyme ornithine carbamoyltransferase. Responsible for the translocation of the substrate across the membrane. The chain is Di/tripeptide transport system permease protein DppC from Pseudomonas aeruginosa (strain UCBPP-PA14).